The sequence spans 523 residues: GMP synthase [glutamine-hydrolyzing] (523 aa).

A Glutamine amidotransferase type-1 domain is found at 9–198 (PVLVVDFGAQ…LTEIAGLEQN (190 aa)). The active-site Nucleophile is the cysteine 86. Residues histidine 172 and glutamate 174 contribute to the active site. The 199-residue stretch at 199-397 (WTAANIAEEL…LGLPEEIVGR (199 aa)) folds into the GMPS ATP-PPase domain. 227 to 233 (SGGVDSA) is a binding site for ATP.

As to quaternary structure, homodimer.

The enzyme catalyses XMP + L-glutamine + ATP + H2O = GMP + L-glutamate + AMP + diphosphate + 2 H(+). It participates in purine metabolism; GMP biosynthesis; GMP from XMP (L-Gln route): step 1/1. Its function is as follows. Catalyzes the synthesis of GMP from XMP. The polypeptide is GMP synthase [glutamine-hydrolyzing] (Corynebacterium glutamicum (strain R)).